Consider the following 455-residue polypeptide: Ribulose bisphosphate carboxylase large chain (455 aa).

K5 is subject to N6,N6,N6-trimethyllysine. Positions 114 and 164 each coordinate substrate. The active-site Proton acceptor is K166. Residue K168 coordinates substrate. Mg(2+) contacts are provided by K192, D194, and E195. K192 carries the post-translational modification N6-carboxylysine. The active-site Proton acceptor is the H285. 3 residues coordinate substrate: R286, H318, and S370.

It belongs to the RuBisCO large chain family. Type I subfamily. Heterohexadecamer of 8 large chains and 8 small chains; disulfide-linked. The disulfide link is formed within the large subunit homodimers. Mg(2+) serves as cofactor. The disulfide bond which can form in the large chain dimeric partners within the hexadecamer appears to be associated with oxidative stress and protein turnover.

Its subcellular location is the plastid. It is found in the chloroplast. It carries out the reaction 2 (2R)-3-phosphoglycerate + 2 H(+) = D-ribulose 1,5-bisphosphate + CO2 + H2O. The catalysed reaction is D-ribulose 1,5-bisphosphate + O2 = 2-phosphoglycolate + (2R)-3-phosphoglycerate + 2 H(+). Its function is as follows. RuBisCO catalyzes two reactions: the carboxylation of D-ribulose 1,5-bisphosphate, the primary event in carbon dioxide fixation, as well as the oxidative fragmentation of the pentose substrate in the photorespiration process. Both reactions occur simultaneously and in competition at the same active site. This chain is Ribulose bisphosphate carboxylase large chain, found in Vachellia farnesiana (Sweet acacia).